Consider the following 511-residue polypeptide: Sodium/hydrogen exchanger 9B1 (511 aa).

Residues 1-10 (MHTTESKDEH) are compositionally biased toward basic and acidic residues. The tract at residues 1–41 (MHTTESKDEHLEDENFQTSTTPQSLIDPNSTAHEETKTVIS) is disordered. Residues 16–31 (FQTSTTPQSLIDPNST) are compositionally biased toward polar residues. A run of 13 helical transmembrane segments spans residues 67-87 (IITNGVILFVIWCTTWSVLGS), 95-115 (LFGLLIIFCSAIIGGKILQLI), 116-136 (RIPLVPPLPPLLGMLLAGFTI), 152-172 (WSSILRSTALTVILIRAGLGL), 187-207 (LAVGPCLMEASAAAVFSHFIM), 215-235 (FLLGFVLGAVSPAIVVPSMMV), 260-280 (VLAITGFNTCLSIVFSSGGIV), 284-304 (IASIKSVSISLLAGIVLGFFV), 337-357 (IGLHGTGGLFTLVLSFIAGTK), 368-388 (IITNVWDIFQPLLFGLVGAEV), 398-418 (IGIFVATLSLALCVRILVTYI), 431-451 (IFIALAWMPKATVQAVLGPLV), and 472-492 (VAFLAILITAPNGALLMGILG).

This sequence belongs to the monovalent cation:proton antiporter 1 (CPA1) transporter (TC 2.A.36) family.

It localises to the cell projection. The protein localises to the cilium. The protein resides in the flagellum membrane. In terms of biological role, sperm-specific Na(+)/H(+) exchanger involved in intracellular pH regulation of spermatozoa. Involved in sperm motility and fertility. This is Sodium/hydrogen exchanger 9B1 (SLC9B1) from Macaca fascicularis (Crab-eating macaque).